Reading from the N-terminus, the 348-residue chain is MEMSFRWYGEDDPVTLENIGQIPTMKGIVTAIYDVPVGEVWSRERIQQLKEKVEAAGLKISVIESVPVHEDIKLGRPTRDLLIDNYIQTVKNLAAEGIDTICYNFMPVFDWTRTDLAYQYPDGSTALIFDETVSKKMDPVNGELSLPGWDASYSKEEMKAIMDAYAEIDEEKLWENLTYFIKRIIPEAEAVGVKMAIHPDDPPYSIFGLPRIITGLEAIERFVKLYDSKSNGITLCVGSYASDPQNDVLEISRRAFELERVNFVHARNIKLGDGKSFKESAHPSEYGSIDMYEVIKLCHEFGFEGAIRPDHGRMIWGETGRPGYGLYDRALGATYLSGLYEAVIKGSK.

It belongs to the mannonate dehydratase family. Fe(2+) serves as cofactor. It depends on Mn(2+) as a cofactor.

The catalysed reaction is D-mannonate = 2-dehydro-3-deoxy-D-gluconate + H2O. It functions in the pathway carbohydrate metabolism; pentose and glucuronate interconversion. Its function is as follows. Catalyzes the dehydration of D-mannonate. The sequence is that of Mannonate dehydratase from Streptococcus agalactiae serotype Ia (strain ATCC 27591 / A909 / CDC SS700).